We begin with the raw amino-acid sequence, 170 residues long: N-alpha-acetyltransferase 50 (170 aa).

In terms of domain architecture, N-acetyltransferase spans 6-155 (IELGDVTPHN…DAHVLQKNLK (150 aa)). Residue tyrosine 31 participates in substrate binding. The active site involves tyrosine 73. Methionine 75 provides a ligand contact to substrate. Position 77 to 90 (77 to 90 (LGCLAPYRRLGIGT)) interacts with acetyl-CoA. Position 79–90 (79–90 (CLAPYRRLGIGT)) interacts with CoA. The active site involves histidine 112. 117-126 (NESAIDFYRK) lines the CoA pocket. The interval 138–141 (YYKR) is substrate.

This sequence belongs to the acetyltransferase family. GNAT subfamily.

The protein resides in the cytoplasm. It localises to the nucleus. The enzyme catalyses N-terminal L-methionyl-L-alanyl-[protein] + acetyl-CoA = N-terminal N(alpha)-acetyl-L-methionyl-L-alanyl-[protein] + CoA + H(+). The catalysed reaction is N-terminal L-methionyl-L-seryl-[protein] + acetyl-CoA = N-terminal N(alpha)-acetyl-L-methionyl-L-seryl-[protein] + CoA + H(+). It catalyses the reaction N-terminal L-methionyl-L-valyl-[protein] + acetyl-CoA = N-terminal N(alpha)-acetyl-L-methionyl-L-valyl-[protein] + CoA + H(+). It carries out the reaction N-terminal L-methionyl-L-threonyl-[protein] + acetyl-CoA = N-terminal N(alpha)-acetyl-L-methionyl-L-threonyl-[protein] + CoA + H(+). The enzyme catalyses N-terminal L-methionyl-L-lysyl-[protein] + acetyl-CoA = N-terminal N(alpha)-acetyl-L-methionyl-L-lysyl-[protein] + CoA + H(+). The catalysed reaction is N-terminal L-methionyl-L-leucyl-[protein] + acetyl-CoA = N-terminal N(alpha)-acetyl-L-methionyl-L-leucyl-[protein] + CoA + H(+). It catalyses the reaction N-terminal L-methionyl-L-phenylalanyl-[protein] + acetyl-CoA = N-terminal N(alpha)-acetyl-L-methionyl-L-phenylalanyl-[protein] + CoA + H(+). It carries out the reaction N-terminal L-methionyl-L-tyrosyl-[protein] + acetyl-CoA = N-terminal N(alpha)-acetyl-L-methionyl-L-tyrosyl-[protein] + CoA + H(+). Functionally, N-alpha-acetyltransferase that acetylates the N-terminus of proteins that retain their initiating methionine. Has a broad substrate specificity: able to acetylate the initiator methionine of most peptides, except for those with a proline in second position. Also displays N-epsilon-acetyltransferase activity by mediating acetylation of the side chain of specific lysines on proteins. The relevance of N-epsilon-acetyltransferase activity is however unclear. Required for sister chromatid cohesion during mitosis by promoting binding of CDCA5/sororin to cohesin. This Xenopus laevis (African clawed frog) protein is N-alpha-acetyltransferase 50 (naa50).